Here is a 756-residue protein sequence, read N- to C-terminus: Nucleomorphin (756 aa).

Residues methionine 1–serine 10 show a composition bias toward polar residues. Positions methionine 1–serine 113 are disordered. Low complexity-rich tracts occupy residues asparagine 16–serine 66 and asparagine 75–asparagine 94. Residues glycine 95–serine 113 are compositionally biased toward polar residues. In terms of domain architecture, BRCT spans leucine 124 to valine 216. Disordered stretches follow at residues asparagine 229–glutamine 251, proline 272–glutamate 298, lysine 359–asparagine 403, and threonine 422–leucine 463. 3 stretches are compositionally biased toward low complexity: residues leucine 285 to glutamate 298, asparagine 364 to lysine 401, and threonine 422 to serine 432. Residues lysine 448–histidine 459 show a composition bias toward basic residues. Positions lysine 464 to lysine 480 match the Nuclear localization signal motif. Residues alanine 495–lysine 512 form a calmodulin binding region. Polar residues predominate over residues serine 514–isoleucine 529. The segment at serine 514–glutamate 587 is disordered. Residues tyrosine 536–glutamate 587 show a composition bias toward acidic residues. Residues aspartate 537–aspartate 588 form a DEED region region. Calmodulin binding stretches follow at residues valine 589 to lysine 606 and lysine 596 to histidine 613. Disordered stretches follow at residues histidine 613–arginine 639 and leucine 660–isoleucine 700. Over residues leucine 668–threonine 691 the composition is skewed to polar residues.

Interacts with calmodulin and CBPD1 in the presence of Ca(2+).

The protein resides in the nucleus. The sequence is that of Nucleomorphin (numA) from Dictyostelium discoideum (Social amoeba).